We begin with the raw amino-acid sequence, 371 residues long: Dual-specificity RNA methyltransferase RlmN (371 aa).

The active-site Proton acceptor is the E114. Residues 120-352 (EEDHFTLCVS…VMTRQSKGAD (233 aa)) form the Radical SAM core domain. A disulfide bridge connects residues C127 and C357. [4Fe-4S] cluster contacts are provided by C134, C138, and C141. Residues 183–184 (GE), S216, 238–240 (SLN), and N314 contribute to the S-adenosyl-L-methionine site. The active-site S-methylcysteine intermediate is C357.

Belongs to the radical SAM superfamily. RlmN family. [4Fe-4S] cluster is required as a cofactor.

Its subcellular location is the cytoplasm. The catalysed reaction is adenosine(2503) in 23S rRNA + 2 reduced [2Fe-2S]-[ferredoxin] + 2 S-adenosyl-L-methionine = 2-methyladenosine(2503) in 23S rRNA + 5'-deoxyadenosine + L-methionine + 2 oxidized [2Fe-2S]-[ferredoxin] + S-adenosyl-L-homocysteine. It carries out the reaction adenosine(37) in tRNA + 2 reduced [2Fe-2S]-[ferredoxin] + 2 S-adenosyl-L-methionine = 2-methyladenosine(37) in tRNA + 5'-deoxyadenosine + L-methionine + 2 oxidized [2Fe-2S]-[ferredoxin] + S-adenosyl-L-homocysteine. Specifically methylates position 2 of adenine 2503 in 23S rRNA and position 2 of adenine 37 in tRNAs. m2A2503 modification seems to play a crucial role in the proofreading step occurring at the peptidyl transferase center and thus would serve to optimize ribosomal fidelity. This is Dual-specificity RNA methyltransferase RlmN from Desulfosudis oleivorans (strain DSM 6200 / JCM 39069 / Hxd3) (Desulfococcus oleovorans).